Consider the following 28-residue polypeptide: Phospholipase A2 pseudexin C chain (28 aa).

Tyrosine 28 serves as a coordination point for Ca(2+).

Belongs to the phospholipase A2 family. Group I subfamily. It depends on Ca(2+) as a cofactor. Expressed by the venom gland.

It localises to the secreted. It catalyses the reaction a 1,2-diacyl-sn-glycero-3-phosphocholine + H2O = a 1-acyl-sn-glycero-3-phosphocholine + a fatty acid + H(+). PLA2 catalyzes the calcium-dependent hydrolysis of the 2-acyl groups in 3-sn-phosphoglycerides. This chain is Phospholipase A2 pseudexin C chain, found in Pseudechis porphyriacus (Red-bellied black snake).